We begin with the raw amino-acid sequence, 386 residues long: Ovalbumin (386 aa).

Gly2 carries the N-acetylglycine modification. Ser69 is subject to Phosphoserine. Cys74 and Cys121 are joined by a disulfide. A glycan (N-linked (GlcNAc...) asparagine) is linked at Asn293. Position 345 is a phosphoserine (Ser345).

This sequence belongs to the serpin family. Ov-serpin subfamily. In terms of processing, the N-terminus is blocked.

It is found in the secreted. Functionally, storage protein of egg white. Lacks protease inhibitory activity. This chain is Ovalbumin (SERPINB14), found in Dromaius novaehollandiae (Emu).